Consider the following 1126-residue polypeptide: DNA-directed RNA polymerase subunit Rpo2 (1126 aa).

Positions 1060, 1063, 1078, and 1081 each coordinate Zn(2+).

The protein belongs to the RNA polymerase beta chain family. In terms of assembly, part of the 13-subunit RNA polymerase complex. Interacts with TFS4. (Microbial infection) Binds viral protein RIP which blocks global transcription. Zn(2+) serves as cofactor.

The protein resides in the cytoplasm. It catalyses the reaction RNA(n) + a ribonucleoside 5'-triphosphate = RNA(n+1) + diphosphate. DNA-dependent RNA polymerase (RNAP) catalyzes the transcription of DNA into RNA using the four ribonucleoside triphosphates as substrates. This subunit is involved in DNA promoter recognition. The protein is DNA-directed RNA polymerase subunit Rpo2 of Sulfolobus acidocaldarius (strain ATCC 33909 / DSM 639 / JCM 8929 / NBRC 15157 / NCIMB 11770).